The primary structure comprises 155 residues: Protein-export protein SecB (155 aa).

The protein belongs to the SecB family. Homotetramer, a dimer of dimers. One homotetramer interacts with 1 SecA dimer.

Its subcellular location is the cytoplasm. In terms of biological role, one of the proteins required for the normal export of preproteins out of the cell cytoplasm. It is a molecular chaperone that binds to a subset of precursor proteins, maintaining them in a translocation-competent state. It also specifically binds to its receptor SecA. This Salmonella heidelberg (strain SL476) protein is Protein-export protein SecB.